A 649-amino-acid chain; its full sequence is tRNA-guanine(15) transglycosylase (649 aa).

Asp-88 serves as the catalytic Nucleophile. Substrate-binding residues include Asp-123 and Ala-194. Zn(2+) is bound by residues Cys-280, Cys-282, and Cys-285. One can recognise a PUA domain in the interval 573–648 (KYRIVIDSSV…VAATLRGGLK (76 aa)).

Belongs to the archaeosine tRNA-ribosyltransferase family. Requires Zn(2+) as cofactor.

It carries out the reaction guanosine(15) in tRNA + 7-cyano-7-deazaguanine = 7-cyano-7-carbaguanosine(15) in tRNA + guanine. Its pathway is tRNA modification; archaeosine-tRNA biosynthesis. Exchanges the guanine residue with 7-cyano-7-deazaguanine (preQ0) at position 15 in the dihydrouridine loop (D-loop) of archaeal tRNAs. This chain is tRNA-guanine(15) transglycosylase, found in Methanococcus maripaludis (strain C6 / ATCC BAA-1332).